Consider the following 1304-residue polypeptide: Myosin-1 (1304 aa).

Positions 1 to 12 are enriched in basic residues; sequence MAIVKRGVRTKN. Positions 1–24 are disordered; that stretch reads MAIVKRGVRTKNKQSQQPSKSGIK. A Myosin motor domain is found at 36–730; the sequence is VGVSDLTLLS…TLFALEDMRD (695 aa). 129–136 provides a ligand contact to ATP; the sequence is GESGAGKT. Position 364 is a phosphoserine (S364). The segment at 413 to 496 is actin-binding; it reads SIGILDIYGF…PGLFAALNDS (84 aa). 2 consecutive IQ domains span residues 734 to 754 and 755 to 780; these read HNMA…KDDA and ARLI…YGNG. In terms of domain architecture, TH1 spans 788-978; that stretch reads RRRMSMLGSR…TVTVRQGLPG (191 aa). 2 disordered regions span residues 963–1162 and 1214–1304; these read DSYK…TYKA and ECDP…DDDW. 2 stretches are compositionally biased toward polar residues: residues 964–983 and 1001–1012; these read SYKS…SQNP and RGSNMRSTSSYQ. Low complexity-rich tracts occupy residues 1029-1052, 1072-1096, and 1120-1140; these read QPPV…PQAQ, QPHA…PQAQ, and PSAP…KKNV. Over residues 1141-1156 the composition is skewed to pro residues; it reads APPPPPAAASPPPKPK. An SH3 domain is found at 1155 to 1217; the sequence is PKFPTYKAAY…PAAYVVECDP (63 aa). 2 stretches are compositionally biased toward low complexity: residues 1217-1227 and 1236-1256; these read PPANSPAGNAK and LNSA…NGAG. The span at 1292–1304 shows a compositional bias: acidic residues; that stretch reads DSDEEDEEDDDDW.

The protein belongs to the TRAFAC class myosin-kinesin ATPase superfamily. Myosin family. Post-translationally, phosphorylation of the TEDS site (Ser-364) is required for the polarization of the actin cytoskeleton. Phosphorylation probably activates the myosin-I ATPase activity.

Its subcellular location is the cytoplasm. The protein localises to the cytoskeleton. The protein resides in the actin patch. Functionally, type-I myosin implicated in the organization of the actin cytoskeleton. Required for proper actin cytoskeleton polarization. At the cell cortex, assembles in patch-like structures together with proteins from the actin-polymerizing machinery and promotes actin assembly. Functions as actin nucleation-promoting factor (NPF) for the Arp2/3 complex. The chain is Myosin-1 (MYO1) from Debaryomyces hansenii (strain ATCC 36239 / CBS 767 / BCRC 21394 / JCM 1990 / NBRC 0083 / IGC 2968) (Yeast).